Here is a 456-residue protein sequence, read N- to C-terminus: PTS system sucrose-specific EIIBC component (456 aa).

Residues glutamate 4–serine 87 enclose the PTS EIIB type-1 domain. The active-site Phosphocysteine intermediate; for EIIB activity is the cysteine 26. One can recognise a PTS EIIC type-1 domain in the interval arginine 107–glutamate 456. 10 consecutive transmembrane segments (helical) span residues isoleucine 112–methionine 132, alanine 144–isoleucine 164, threonine 181–phenylalanine 201, methionine 213–valine 233, leucine 247–glycine 267, alanine 288–isoleucine 308, phenylalanine 329–tryptophan 349, isoleucine 360–isoleucine 380, phenylalanine 388–tyrosine 408, and leucine 428–valine 448.

The protein localises to the cell inner membrane. It carries out the reaction N(pros)-phospho-L-histidyl-[protein](out) + sucrose = sucrose 6(G)-phosphate(in) + L-histidyl-[protein]. Functionally, the phosphoenolpyruvate-dependent sugar phosphotransferase system (sugar PTS), a major carbohydrate active transport system, catalyzes the phosphorylation of incoming sugar substrates concomitantly with their translocation across the cell membrane. This system is involved in sucrose transport. This Salmonella typhimurium protein is PTS system sucrose-specific EIIBC component.